Reading from the N-terminus, the 429-residue chain is MIDPNLLRNNLAEVAEKLKVKRNFMLDTEKLTALEDQRKNLQVTTENLQAERNARSKAIGAAKVRGEDIAPLLAEMDDMGNQLTEAKAQLDAVLAEINQIALSIPNLPADEVPLGKDDTENKEILRWGTPHTFDFEVKDHITLGEEANGLDFAAGAKLAGARFAVMKGQIAKMHRALAQFMLDLHTEQHGYLETYVPYLVNHATLYGTGQLPKFGEDLFHTLALEGEQPYALIPTAEVPVTNLVRDVIIDEAELPIKMTAHTPCFRSEAGSYGRDTRGLIRMHQFDKVEMVQIVDPDKSMEALEELTGHAEKVLQLLNLPYRKVLLCTGDMGFGSCKTYDLEVWLPAQNTYREISSCSNMWDFQARRMQARCKAKGDKKTRLVHTLNGSGLAVGRTLVAVLENYQNADGSITVPEELRPYMGGLDVIGK.

Residue 235–237 (TAE) coordinates L-serine. 266–268 (RSE) lines the ATP pocket. Residue glutamate 289 participates in L-serine binding. 353-356 (EISS) is an ATP binding site. Serine 389 lines the L-serine pocket.

It belongs to the class-II aminoacyl-tRNA synthetase family. Type-1 seryl-tRNA synthetase subfamily. Homodimer. The tRNA molecule binds across the dimer.

It is found in the cytoplasm. The catalysed reaction is tRNA(Ser) + L-serine + ATP = L-seryl-tRNA(Ser) + AMP + diphosphate + H(+). The enzyme catalyses tRNA(Sec) + L-serine + ATP = L-seryl-tRNA(Sec) + AMP + diphosphate + H(+). It participates in aminoacyl-tRNA biosynthesis; selenocysteinyl-tRNA(Sec) biosynthesis; L-seryl-tRNA(Sec) from L-serine and tRNA(Sec): step 1/1. Functionally, catalyzes the attachment of serine to tRNA(Ser). Is also able to aminoacylate tRNA(Sec) with serine, to form the misacylated tRNA L-seryl-tRNA(Sec), which will be further converted into selenocysteinyl-tRNA(Sec). The protein is Serine--tRNA ligase of Haemophilus influenzae (strain 86-028NP).